We begin with the raw amino-acid sequence, 204 residues long: Translation initiation factor IF-3 (204 aa).

A disordered region spans residues 169 to 204 (VPKAAPKRDSGRSESAQEAPTARSAEASRPEAPANA).

Belongs to the IF-3 family. In terms of assembly, monomer.

The protein localises to the cytoplasm. Its function is as follows. IF-3 binds to the 30S ribosomal subunit and shifts the equilibrium between 70S ribosomes and their 50S and 30S subunits in favor of the free subunits, thus enhancing the availability of 30S subunits on which protein synthesis initiation begins. This chain is Translation initiation factor IF-3, found in Deinococcus geothermalis (strain DSM 11300 / CIP 105573 / AG-3a).